A 1175-amino-acid chain; its full sequence is Solute carrier family 9 member C1 (1175 aa).

The Extracellular portion of the chain corresponds to 1–39 (MEMEEISENLTASHSIKLTNMWLELLKSVFLSTPQDLPE). A helical transmembrane segment spans residues 40 to 59 (IILILSLICTVGAFLNMHLK). The Cytoplasmic segment spans residues 60 to 64 (DFPIP). The helical transmembrane segment at 65 to 82 (LPVILFLIGCCFEILSFA) threads the bilayer. Residues 83–98 (STQIQIYADAIQWMDP) lie on the Extracellular side of the membrane. A helical transmembrane segment spans residues 99-115 (DIFFGIFTPVIIFNVAF). Residues 116 to 125 (DMDIYMLQKL) lie on the Cytoplasmic side of the membrane. The helical transmembrane segment at 126–151 (FWQILVITIPGFLINYTLILWYLQSV) threads the bilayer. The segment at 126-213 (FWQILVITIP…SLVIYSGVVH (88 aa)) is transport core domain. Over 152–157 (NKLSLK) the chain is Extracellular. The helical transmembrane segment at 158–183 (TVPWLLFSAVLISSDPMLTSASIRDL) threads the bilayer. At 184-186 (GLS) the chain is on the cytoplasmic side. Residues 187–212 (RSLTNLINGESLLTSVLSLVIYSGVV) traverse the membrane as a helical segment. Residues 213-225 (HIRFKSKSVNHTL) are Extracellular-facing. Residues 226–257 (AHKVMSTAWSYIVESFITGIVFTKVIQLWMAT) traverse the membrane as a helical segment. The Cytoplasmic segment spans residues 258–261 (IFGD). Residues 262-283 (DVNHITLIFSVLYLIFYVCELV) traverse the membrane as a helical segment. Over 284–286 (GMS) the chain is Extracellular. The chain crosses the membrane as a helical span at residues 287 to 300 (GIFTLATIGLFLNS). Residues 301–307 (TSFKPGV) are Cytoplasmic-facing. A helical transmembrane segment spans residues 308-339 (EAFLLEFWNCLSFIGFLMVFTFIGLLIPAHTY). Residues 340–344 (LHISF) lie on the Extracellular side of the membrane. Residues 345-374 (SDVYYSLNIYFTLIVLRLLVFLLMSPILSR) form a helical membrane-spanning segment. The transport core domain stretch occupies residues 345–446 (SDVYYSLNIY…FILPMAVTKL (102 aa)). The Cytoplasmic portion of the chain corresponds to 375–380 (LGHGFS). A helical membrane pass occupies residues 381–411 (WRWAFIMVWSEMKGTPNINMALLLAYSDISL). Residues 412–415 (GSER) are Extracellular-facing. The helical transmembrane segment at 416–446 (ERSQILFHGVSVCVITLIVNRFILPMAVTKL) threads the bilayer. Over 447–632 (GLRDVTSTKY…ACHRIVFTNE (186 aa)) the chain is Cytoplasmic. Residues 618–698 (YMFLHACHRI…EFFSHTWLLF (81 aa)) are ion transport-like. A helical transmembrane segment spans residues 633–653 (FEYTGYLVVLMSTYPMIICWI). At 654-657 (SRLK) the chain is on the extracellular side. Residues 658–684 (DIYDNEIKCANYYFLAFYILEALLKVA) traverse the membrane as a helical segment. Topologically, residues 685-691 (AMRKEFF) are cytoplasmic. Residues 692 to 716 (SHTWLLFELGITLVGVLDIILIETD) form a helical membrane-spanning segment. Residues 717-724 (SISYNFDL) are Extracellular-facing. A helical membrane pass occupies residues 725–751 (TETVVFMNVIRLLRILRILKLVTPKLL). Topologically, residues 752–1175 (QIIDKRMSQQ…EELIEENINI (424 aa)) are cytoplasmic. Basic and acidic residues predominate over residues 1137–1146 (MKPDSERESF). The interval 1137–1175 (MKPDSERESFETLDETSEEDNGKKENQENEELIEENINI) is disordered. The span at 1164-1175 (ENEELIEENINI) shows a compositional bias: acidic residues.

This sequence belongs to the monovalent cation:proton antiporter 1 (CPA1) transporter (TC 2.A.36) family. Interacts with soluble adenylyl cyclase (sAC). In terms of tissue distribution, testis-specific. Specifically present in the principal piece of sperm tail (at protein level).

It localises to the cell projection. The protein localises to the cilium. The protein resides in the flagellum membrane. Functionally, sperm-specific solute carrier involved in intracellular pH regulation of spermatozoa. Required for sperm motility and fertility. Involved in sperm cell hyperactivation, a step needed for sperm motility which is essential late in the preparation of sperm for fertilization. Required for the expression and bicarbonate regulation of the soluble adenylyl cyclase (sAC). This is Solute carrier family 9 member C1 (Slc9c1) from Mus musculus (Mouse).